The sequence spans 346 residues: MKEKKDIRILAFESSCDETSTAVVKNGSEIESLVVATQIKSHARFGGVVPEVASRHHIEVITQITREALEEAKVSWEDLDAIAVTHGPGLVGALLIGINAAKAASMATGLPLIGVDHIMGHISAAQLVEPVEYPALALQVSGGHTEIALLKDPTHFEIVGDTRDDAAGEAYDKIGRVLGVNYPAGKTIDQWAHQGKDTFGFPRAMIDEDNYDFSFSGLKSAFINTCHHADQIGEKLDKYDLAASFQAAVVDVLAEKTVRAIRQYQPKTFIMGGGVAANLGLRERMNKEIAALEKAPKVILPPLKLCGDNAAMIGAAAYNQYLAGNFADLTLDADPSMELPYAEDYK.

Fe cation is bound by residues His-117 and His-121. Substrate contacts are provided by residues 139–143 (QVSGG), Asp-172, Gly-185, Asp-189, and Asn-278. Asp-308 contributes to the Fe cation binding site.

It belongs to the KAE1 / TsaD family. It depends on Fe(2+) as a cofactor.

The protein localises to the cytoplasm. The enzyme catalyses L-threonylcarbamoyladenylate + adenosine(37) in tRNA = N(6)-L-threonylcarbamoyladenosine(37) in tRNA + AMP + H(+). Required for the formation of a threonylcarbamoyl group on adenosine at position 37 (t(6)A37) in tRNAs that read codons beginning with adenine. Is involved in the transfer of the threonylcarbamoyl moiety of threonylcarbamoyl-AMP (TC-AMP) to the N6 group of A37, together with TsaE and TsaB. TsaD likely plays a direct catalytic role in this reaction. In Lactobacillus delbrueckii subsp. bulgaricus (strain ATCC 11842 / DSM 20081 / BCRC 10696 / JCM 1002 / NBRC 13953 / NCIMB 11778 / NCTC 12712 / WDCM 00102 / Lb 14), this protein is tRNA N6-adenosine threonylcarbamoyltransferase.